The following is a 317-amino-acid chain: MKSDNHSFLGDSPKAFILLGVSDRPWLELPLFVVLLLSYVLAMLGNVAIILASRVDPQLHSPMYIFLSHLSFLDLCYTTTTVPQMLVNMGSSQKTISYGGCTVQYAVFHWLGCTECIVLAAMALDRYVAICKPLHYAVLMHRALCQQLVALAWLSGFGNSFVQVVLTVQLPFCGRQVLNNFFCEVPAVIKLSCADTAVNDTILAVLVAFFVLVPLALILLSYGFIARAVLRIQSSKGRHKAFGTCSSHLMIVSLFYLPAIYMYLQPPSSYSQEQGKFISLFYSIITPTLNPFTYTLRNKDMKGALRRLLARIWRLCG.

Residues 1–29 lie on the Extracellular side of the membrane; the sequence is MKSDNHSFLGDSPKAFILLGVSDRPWLEL. A glycan (N-linked (GlcNAc...) asparagine) is linked at Asn5. A helical transmembrane segment spans residues 30–53; it reads PLFVVLLLSYVLAMLGNVAIILAS. At 54-61 the chain is on the cytoplasmic side; it reads RVDPQLHS. Residues 62-83 form a helical membrane-spanning segment; the sequence is PMYIFLSHLSFLDLCYTTTTVP. The Extracellular segment spans residues 84-104; the sequence is QMLVNMGSSQKTISYGGCTVQ. Cys101 and Cys193 are disulfide-bonded. A helical transmembrane segment spans residues 105–124; the sequence is YAVFHWLGCTECIVLAAMAL. At 125-143 the chain is on the cytoplasmic side; the sequence is DRYVAICKPLHYAVLMHRA. The chain crosses the membrane as a helical span at residues 144–162; that stretch reads LCQQLVALAWLSGFGNSFV. At 163–199 the chain is on the extracellular side; that stretch reads QVVLTVQLPFCGRQVLNNFFCEVPAVIKLSCADTAVN. An N-linked (GlcNAc...) asparagine glycan is attached at Asn199. Residues 200–223 traverse the membrane as a helical segment; that stretch reads DTILAVLVAFFVLVPLALILLSYG. At 224 to 240 the chain is on the cytoplasmic side; sequence FIARAVLRIQSSKGRHK. Residues 241 to 263 form a helical membrane-spanning segment; that stretch reads AFGTCSSHLMIVSLFYLPAIYMY. The Extracellular portion of the chain corresponds to 264-276; the sequence is LQPPSSYSQEQGK. Residues 277–296 traverse the membrane as a helical segment; it reads FISLFYSIITPTLNPFTYTL. The Cytoplasmic segment spans residues 297–317; that stretch reads RNKDMKGALRRLLARIWRLCG.

The protein belongs to the G-protein coupled receptor 1 family.

It localises to the cell membrane. Odorant receptor. This Homo sapiens (Human) protein is Olfactory receptor 2B11 (OR2B11).